A 584-amino-acid chain; its full sequence is AP-1-like transcription factor yap1 (584 aa).

Residues 23 to 179 are disordered; that stretch reads LAALSSNQPP…AFRERKEKHL (157 aa). Positions 35 to 42 match the Bipartite nuclear localization signal motif; it reads QQNDKQRS. Residues 36–48 are compositionally biased toward basic and acidic residues; that stretch reads QNDKQRSQAKTDP. Residues 52 to 67 are compositionally biased toward low complexity; the sequence is PGNMSSGSFSMSPGFN. The Bipartite nuclear localization signal signature appears at 68–75; sequence KTHPGSGG. Residues 79 to 94 are compositionally biased toward acidic residues; it reads GDDESPFLDFNPELDF. Basic and acidic residues-rich tracts occupy residues 112–144 and 170–179; these read SEEHEVGEKRKDMSDNENEESGKKRRESDDKAA and AFRERKEKHL. Residues 154 to 217 form the bZIP domain; the sequence is SEPTSKRKAQ…ERLQVELREY (64 aa). The segment at 159–180 is basic motif; the sequence is KRKAQNRAAQRAFRERKEKHLK. The interval 182–189 is leucine-zipper; sequence LETKVDEL. A transcription activation 1 region spans residues 211-332; it reads QVELREYRKR…PSPKVPSVYN (122 aa). 2 disordered regions span residues 267–379 and 418–441; these read IFNG…TKLN and RGKSESVSNTPSQPNNNYEQTPGP. The n-CRD stretch occupies residues 284 to 296; it reads SSPATSDSQVPGV. The segment covering 300–309 has biased composition (polar residues); it reads ETLNGSNNRG. The segment covering 336–362 has biased composition (low complexity); sequence SASSHDSSNSCSPSSSSDSHQSQMLSS. Polar residues-rich tracts occupy residues 363–379 and 422–437; these read NGTSPEPSSNSPATKLN and ESVSNTPSQPNNNYEQ. Residues 377–480 are transcription activation 2; that stretch reads KLNDSVQNHH…SQDFGTFFDD (104 aa). Disulfide bonds link Cys-531-Cys-555, Cys-531-Cys-564, and Cys-555-Cys-564. Residues 531–564 are c-CRD; the sequence is CTKIWDRLQSMEKFRNGEIDVDNLCSELRTKARC. A Nuclear export signal motif is present at residues 549 to 556; it reads IDVDNLCS.

It belongs to the bZIP family. YAP subfamily. Post-translationally, depending on the oxidative stress inducing agent, yap1 can undergo two distinct conformational changes, both involving disulfide bond formation, and both masking the nuclear export signal, thus abolishing nuclear export.

The protein resides in the nucleus. Its subcellular location is the cytoplasm. Its function is as follows. Transcription activator involved in oxidative stress response and redox homeostasis. Regulates the transcription of genes encoding antioxidant enzymes and components of the cellular thiol-reducing pathways. May be involved in antifungal resistance to voriconazole. This is AP-1-like transcription factor yap1 from Aspergillus flavus (strain ATCC 200026 / FGSC A1120 / IAM 13836 / NRRL 3357 / JCM 12722 / SRRC 167).